The chain runs to 362 residues: Flagellar P-ring protein (362 aa).

Residues 1–15 form the signal peptide; the sequence is MLAAALMSAAFGAHA.

The protein belongs to the FlgI family. The basal body constitutes a major portion of the flagellar organelle and consists of four rings (L,P,S, and M) mounted on a central rod.

It localises to the periplasm. Its subcellular location is the bacterial flagellum basal body. Assembles around the rod to form the L-ring and probably protects the motor/basal body from shearing forces during rotation. This chain is Flagellar P-ring protein, found in Pseudomonas fluorescens (strain Pf0-1).